The primary structure comprises 539 residues: Alpha-aminoadipic semialdehyde dehydrogenase (539 aa).

A mitochondrion-targeting transit peptide spans 1 to 26 (MLRLARPLCVQTVKASKLSRLWSRPA). An N6-acetyllysine; alternate mark is found at lysine 86, lysine 94, and lysine 97. N6-succinyllysine; alternate occurs at positions 86, 94, and 97. NAD(+)-binding positions include 192–194 (TAF), lysine 218, 258–259 (GT), 274–275 (GS), 274–279 (GSTQVG), and 296–297 (EL). Glutamate 296 serves as the catalytic Proton acceptor. Cysteine 330 acts as the Nucleophile in catalysis. Residue threonine 331 coordinates (S)-2-amino-6-oxohexanoate. Glutamate 427 serves as a coordination point for NAD(+). Lysine 462 is modified (N6-acetyllysine). Residues glycine 489 and alanine 490 each contribute to the (S)-2-amino-6-oxohexanoate site. An N6-acetyllysine modification is found at lysine 500. Lysine 537 is subject to N6-succinyllysine.

Belongs to the aldehyde dehydrogenase family. Homotetramer. In terms of tissue distribution, abundant in kidney, liver, cochlea and outer hair cells but not inner hair cells or vestibular type I hair cells. Very low levels in lung, brain, intestine and pancreas.

It localises to the cytoplasm. Its subcellular location is the cytosol. It is found in the nucleus. The protein localises to the mitochondrion. It catalyses the reaction nonanal + NAD(+) + H2O = nonanoate + NADH + 2 H(+). The enzyme catalyses (S)-2-amino-6-oxohexanoate + NAD(+) + H2O = L-2-aminoadipate + NADH + 2 H(+). The catalysed reaction is betaine aldehyde + NAD(+) + H2O = glycine betaine + NADH + 2 H(+). It carries out the reaction an aldehyde + NAD(+) + H2O = a carboxylate + NADH + 2 H(+). It catalyses the reaction hexanal + NAD(+) + H2O = hexanoate + NADH + 2 H(+). The enzyme catalyses octanal + NAD(+) + H2O = octanoate + NADH + 2 H(+). The catalysed reaction is (E)-non-2-enal + NAD(+) + H2O = (E)-non-2-enoate + NADH + 2 H(+). It carries out the reaction (E)-4-hydroxynon-2-enal + NAD(+) + H2O = (E)-4-hydroxynon-2-enoate + NADH + 2 H(+). It participates in amine and polyamine biosynthesis; betaine biosynthesis via choline pathway; betaine from betaine aldehyde: step 1/1. Functionally, multifunctional enzyme mediating important protective effects. Metabolizes betaine aldehyde to betaine, an important cellular osmolyte and methyl donor. Protects cells from oxidative stress by metabolizing a number of lipid peroxidation-derived aldehydes. Involved in lysine catabolism. This is Alpha-aminoadipic semialdehyde dehydrogenase from Rattus norvegicus (Rat).